Consider the following 429-residue polypeptide: MLYSRSVAKINGVSARQILDSRGRPTVEAVVSLSDGALGVVSVPSGASVGKNEALELRDKDMNKYGGHGVTKAVENVNSIIAPRLVNTDPFNQKALDDLLIELDGTDNKSRLGANATLAVSVATAKAAAASLKLPLYRYIGGVASREMPVPLVNVINGGLHADNGLDFQEFMIMPIGASTFSDALRMCAEVFLSLKEILKSNKLSTNTGDEGGFAPNLESNDRVFCILLEAIEKAGYKPSIDFALALDVAASTFYDGKIYKFSGSSMSSAEMVSYYEELVKKYPIISIEDGIAEDDLAGWKELTVRLGKKVQLVGDDLFVTNPRLIKDFSERGLANAVLIKPNQIGTLSETIEAIRLASMSNFNSIVSHRSGDTEDPFIAHIAVALNCGQIKTGSMSRSERMAKYNELLRIEEDLCGTAILRSVKIGRH.

Glutamine 169 provides a ligand contact to (2R)-2-phosphoglycerate. Residue glutamate 211 is the Proton donor of the active site. Mg(2+)-binding residues include aspartate 248, glutamate 289, and aspartate 316. Lysine 341, arginine 370, serine 371, and lysine 392 together coordinate (2R)-2-phosphoglycerate. Residue lysine 341 is the Proton acceptor of the active site.

Belongs to the enolase family. Requires Mg(2+) as cofactor.

The protein resides in the cytoplasm. Its subcellular location is the secreted. It is found in the cell surface. The enzyme catalyses (2R)-2-phosphoglycerate = phosphoenolpyruvate + H2O. It participates in carbohydrate degradation; glycolysis; pyruvate from D-glyceraldehyde 3-phosphate: step 4/5. Catalyzes the reversible conversion of 2-phosphoglycerate (2-PG) into phosphoenolpyruvate (PEP). It is essential for the degradation of carbohydrates via glycolysis. The protein is Enolase of Anaplasma phagocytophilum (strain HZ).